The following is a 331-amino-acid chain: 5-dehydro-2-deoxygluconokinase (331 aa).

Belongs to the carbohydrate kinase PfkB family.

It carries out the reaction 5-dehydro-2-deoxy-D-gluconate + ATP = 6-phospho-5-dehydro-2-deoxy-D-gluconate + ADP + H(+). It participates in polyol metabolism; myo-inositol degradation into acetyl-CoA; acetyl-CoA from myo-inositol: step 5/7. Its function is as follows. Catalyzes the phosphorylation of 5-dehydro-2-deoxy-D-gluconate (2-deoxy-5-keto-D-gluconate or DKG) to 6-phospho-5-dehydro-2-deoxy-D-gluconate (DKGP). This is 5-dehydro-2-deoxygluconokinase from Photobacterium profundum (strain SS9).